The chain runs to 91 residues: Putative pterin-4-alpha-carbinolamine dehydratase (91 aa).

This sequence belongs to the pterin-4-alpha-carbinolamine dehydratase family.

The catalysed reaction is (4aS,6R)-4a-hydroxy-L-erythro-5,6,7,8-tetrahydrobiopterin = (6R)-L-erythro-6,7-dihydrobiopterin + H2O. This is Putative pterin-4-alpha-carbinolamine dehydratase from Sulfolobus acidocaldarius (strain ATCC 33909 / DSM 639 / JCM 8929 / NBRC 15157 / NCIMB 11770).